A 149-amino-acid polypeptide reads, in one-letter code: UPF0756 membrane protein Nther_1957 (149 aa).

4 consecutive transmembrane segments (helical) span residues 5 to 25 (IVVL…LVAT), 52 to 72 (LGIL…DIMP), 85 to 105 (LIAV…VELL), and 111 to 131 (VMVG…GVPA).

Belongs to the UPF0756 family.

The protein localises to the cell membrane. This Natranaerobius thermophilus (strain ATCC BAA-1301 / DSM 18059 / JW/NM-WN-LF) protein is UPF0756 membrane protein Nther_1957.